The primary structure comprises 281 residues: E2F-associated phosphoprotein (281 aa).

M1 is subject to N-acetylmethionine. Residues 1 to 27 (MNRLQDDYDPYAVEEPSDEEPALSSSE) are disordered. Residues 15-27 (EPSDEEPALSSSE) are compositionally biased toward acidic residues. The residue at position 17 (S17) is a Phosphoserine. Phosphothreonine is present on T37. 2 positions are modified to phosphoserine: S109 and S111. Residues 222-245 (PENRRKRRSAKKMRSNPEDPAERE) form a disordered region. Positions 225–235 (RRKRRSAKKMR) are enriched in basic residues. The span at 236-245 (SNPEDPAERE) shows a compositional bias: basic and acidic residues.

In terms of assembly, interacts with E2F1. The C-terminal half binds the N-terminal of E2F1. Also interacts with E2F2 and E2F3, but not E2F4.

It localises to the cytoplasm. The protein resides in the nucleus. May play an important role in the fine-tuning of both major E2F1 activities, the regulation of the cell-cycle and the induction of apoptosis. Promotes S-phase entry, and inhibits p14(ARP) expression. The chain is E2F-associated phosphoprotein (Eapp) from Mus musculus (Mouse).